The sequence spans 417 residues: Serine hydroxymethyltransferase (417 aa).

(6S)-5,6,7,8-tetrahydrofolate is bound by residues Leu-121 and 125-127 (GHL). Lys-229 carries the N6-(pyridoxal phosphate)lysine modification. 355–357 (SPF) lines the (6S)-5,6,7,8-tetrahydrofolate pocket.

It belongs to the SHMT family. Homodimer. The cofactor is pyridoxal 5'-phosphate.

The protein resides in the cytoplasm. The catalysed reaction is (6R)-5,10-methylene-5,6,7,8-tetrahydrofolate + glycine + H2O = (6S)-5,6,7,8-tetrahydrofolate + L-serine. It functions in the pathway one-carbon metabolism; tetrahydrofolate interconversion. Its pathway is amino-acid biosynthesis; glycine biosynthesis; glycine from L-serine: step 1/1. Catalyzes the reversible interconversion of serine and glycine with tetrahydrofolate (THF) serving as the one-carbon carrier. This reaction serves as the major source of one-carbon groups required for the biosynthesis of purines, thymidylate, methionine, and other important biomolecules. Also exhibits THF-independent aldolase activity toward beta-hydroxyamino acids, producing glycine and aldehydes, via a retro-aldol mechanism. This Xanthomonas euvesicatoria pv. vesicatoria (strain 85-10) (Xanthomonas campestris pv. vesicatoria) protein is Serine hydroxymethyltransferase.